Reading from the N-terminus, the 313-residue chain is Porphobilinogen deaminase (313 aa).

Cys-241 is modified (S-(dipyrrolylmethanemethyl)cysteine).

It belongs to the HMBS family. Monomer. Dipyrromethane is required as a cofactor.

The catalysed reaction is 4 porphobilinogen + H2O = hydroxymethylbilane + 4 NH4(+). It participates in porphyrin-containing compound metabolism; protoporphyrin-IX biosynthesis; coproporphyrinogen-III from 5-aminolevulinate: step 2/4. Functionally, tetrapolymerization of the monopyrrole PBG into the hydroxymethylbilane pre-uroporphyrinogen in several discrete steps. The chain is Porphobilinogen deaminase from Sulfurimonas denitrificans (strain ATCC 33889 / DSM 1251) (Thiomicrospira denitrificans (strain ATCC 33889 / DSM 1251)).